A 510-amino-acid polypeptide reads, in one-letter code: MKKYILSLDQGTTSSRAILXNKKGEIVHSAQKEFTQHFPKPGWVEHNAQEIWGSILAVIATCLSEADVKPEQIAGIGITNQRETAVVWDKTTGKPIYNAIVWQSRQTAEICDELKEKGYGEMVREKTGLLIDAYFSGTKVKWILDNVEGAREKAENGDLLFGTIDTWLVWKLSGGKAHVTDYSNASRTLMFNIHDLQWDDELLDMLTVPKSMLPEVRPSSEVYGETIDYHFFGQNVPIAGVAGDQQAALFGQACFGEGMAKNTYGTGCFMLMNTGEKAVASEHGLLTTIAWGIDGKVNYALEGSIFVAGSAIQWLRDGMRMFKDASESEVYANRVESTDGVYVVPAFVGLGTPYWDSEVRGAMFGVTRGTTKEHFIRATLESLAYQXKDVLCAMEADSGIELKTLRVDGGAVKNNFLMKFQSDILDVPVERPVINETTALGAAYLAGLAVGYWKNQDEIKEQWHMDKRLNQQWKRKQAKSYMLDGKKQLKQQKLSNNHKQCYNGDKLIIR.

Residue T12 coordinates ADP. ATP contacts are provided by T12, T13, and S14. T12 is a sn-glycerol 3-phosphate binding site. Position 16 (R16) interacts with ADP. Residues R82, E83, and Y134 each contribute to the sn-glycerol 3-phosphate site. Residues R82, E83, and Y134 each coordinate glycerol. A Phosphohistidine; by HPr modification is found at H230. D244 lines the sn-glycerol 3-phosphate pocket. Glycerol-binding residues include D244 and Q245. ADP-binding residues include T266 and G309. ATP-binding residues include T266, G309, Q313, and G410. 2 residues coordinate ADP: G410 and N414.

This sequence belongs to the FGGY kinase family. Homotetramer and homodimer (in equilibrium). Post-translationally, the phosphoenolpyruvate-dependent sugar phosphotransferase system (PTS), including enzyme I, and histidine-containing protein (HPr) are required for the phosphorylation, which leads to the activation of the enzyme.

It carries out the reaction glycerol + ATP = sn-glycerol 3-phosphate + ADP + H(+). The protein operates within polyol metabolism; glycerol degradation via glycerol kinase pathway; sn-glycerol 3-phosphate from glycerol: step 1/1. Its activity is regulated as follows. Activated by phosphorylation and inhibited by fructose 1,6-bisphosphate (FBP). In terms of biological role, key enzyme in the regulation of glycerol uptake and metabolism. Catalyzes the phosphorylation of glycerol to yield sn-glycerol 3-phosphate. The chain is Glycerol kinase from Bacillus cereus (strain ATCC 10987 / NRS 248).